The sequence spans 197 residues: Recombination protein RecR (197 aa).

Residues 57–72 (CSTCFGITESDPCHLC) form a C4-type zinc finger. The Toprim domain maps to 79 to 174 (ASICVVEEPQ…KVTRLAHGIP (96 aa)).

This sequence belongs to the RecR family.

Its function is as follows. May play a role in DNA repair. It seems to be involved in an RecBC-independent recombinational process of DNA repair. It may act with RecF and RecO. This is Recombination protein RecR from Geotalea uraniireducens (strain Rf4) (Geobacter uraniireducens).